Reading from the N-terminus, the 239-residue chain is MQPFSIPVQITLQGGRRRQGRTALPASGISNGDPLKVHPKLPSSAGEDRATLLGIAMMASSVLMFFLLGTTVLKPFMLSSPREESNCTTVHTHIADDWLDFAFTCEGSCQGQGTYPCLQVFVNLSHSGQKVLLHYDEEAIRTNPKCFYTPKCHGDRDHLLNSALDIKEFFDHNNGTFPCFYSPDGPLGVVLRKSGHKVVFHCLFWPLLTLLGGALIVGLVRLTQHLSFQCEKYRAVVRA.

The Cytoplasmic portion of the chain corresponds to 1-51 (MQPFSIPVQITLQGGRRRQGRTALPASGISNGDPLKVHPKLPSSAGEDRAT). The segment at 15 to 38 (GRRRQGRTALPASGISNGDPLKVH) is disordered. A helical membrane pass occupies residues 52 to 72 (LLGIAMMASSVLMFFLLGTTV). Topologically, residues 73–197 (LKPFMLSSPR…GVVLRKSGHK (125 aa)) are extracellular. 3 N-linked (GlcNAc...) asparagine glycosylation sites follow: Asn-86, Asn-123, and Asn-174. A helical transmembrane segment spans residues 198 to 218 (VVFHCLFWPLLTLLGGALIVG). The Cytoplasmic portion of the chain corresponds to 219-239 (LVRLTQHLSFQCEKYRAVVRA).

This sequence belongs to the KCNMB (TC 8.A.14.1) family. KCNMB3 subfamily. Interacts with KCNMA1 tetramer. There are probably 4 molecules of KCMNB3 per KCNMA1 tetramer. N-glycosylated. Post-translationally, the extracellular domain contains disulfide bond essential for the gating mechanism.

It is found in the membrane. Regulatory subunit of the calcium activated potassium KCNMA1 (maxiK) channel. Modulates the calcium sensitivity and gating kinetics of KCNMA1, thereby contributing to KCNMA1 channel diversity. Alters the functional properties of the current expressed by the KCNMA1 channel. May partially inactivate the current of KCNBMA. Two or more subunits of KCNMB3 are required to block the KCNMA1 tetramer. This chain is Calcium-activated potassium channel subunit beta-3, found in Rattus norvegicus (Rat).